A 579-amino-acid chain; its full sequence is Thiol:disulfide interchange protein DsbD (579 aa).

Residues 1-16 (MKKLFLFFTLIFTAFA) form the signal peptide. Intrachain disulfides connect Cys-124/Cys-129 and Cys-193/Cys-315. A run of 8 helical transmembrane segments spans residues 178-198 (IFGF…LPML), 230-250 (LTYT…QIAL), 254-274 (YVMI…FGLF), 296-316 (GAFG…SPCT), 337-357 (AATL…ITLF), 376-396 (FGFV…PEVW), 397-417 (EPRL…LQMS), and 420-440 (GFGY…VQPL). In terms of domain architecture, Thioredoxin spans 449–579 (TTTQSAVENK…AFSNWLKALH (131 aa)). Cys-495 and Cys-498 are disulfide-bonded.

It belongs to the thioredoxin family. DsbD subfamily.

It is found in the cell inner membrane. It carries out the reaction [protein]-dithiol + NAD(+) = [protein]-disulfide + NADH + H(+). The catalysed reaction is [protein]-dithiol + NADP(+) = [protein]-disulfide + NADPH + H(+). Required to facilitate the formation of correct disulfide bonds in some periplasmic proteins and for the assembly of the periplasmic c-type cytochromes. Acts by transferring electrons from cytoplasmic thioredoxin to the periplasm. This transfer involves a cascade of disulfide bond formation and reduction steps. The polypeptide is Thiol:disulfide interchange protein DsbD (Haemophilus influenzae (strain PittEE)).